We begin with the raw amino-acid sequence, 243 residues long: MSELVPPNIPAEFLPRHIALVMDGNGRWATEKGMKRTEGHRRGEAVLLDVVDACLALGVPYLSAYAFSTENWRRSTEEVRFLMGFNRDVLRRQRDGLHEKGVRVRWVGRRPRLWRSVIRELEAAEELTKDNTNMTLAMCVNYGGRAEIIDAAREIARQAAAGQLRPEQINEKTFPDFLDEPDMPDVDLFLRPSGEKRTSNFLLWQSAYAEMVYQDKLFPDFTPQDLFDAVEEYARRDRRFGTA.

Residue Asp-23 is part of the active site. Asp-23 lines the Mg(2+) pocket. Residues 24 to 27 (GNGR), Trp-28, Arg-36, His-40, and 68 to 70 (STE) each bind substrate. Asn-71 acts as the Proton acceptor in catalysis. Substrate is bound by residues Trp-72, Arg-74, Arg-191, and 197 to 199 (RTS). Glu-210 lines the Mg(2+) pocket.

This sequence belongs to the UPP synthase family. Homodimer. Mg(2+) serves as cofactor.

In terms of biological role, catalyzes the condensation of isopentenyl diphosphate (IPP) with allylic pyrophosphates generating different type of terpenoids. This chain is Isoprenyl transferase 2, found in Corynebacterium efficiens (strain DSM 44549 / YS-314 / AJ 12310 / JCM 11189 / NBRC 100395).